The sequence spans 147 residues: Large ribosomal subunit protein uL13 (147 aa).

This sequence belongs to the universal ribosomal protein uL13 family. Part of the 50S ribosomal subunit.

Its function is as follows. This protein is one of the early assembly proteins of the 50S ribosomal subunit, although it is not seen to bind rRNA by itself. It is important during the early stages of 50S assembly. This is Large ribosomal subunit protein uL13 from Pseudarthrobacter chlorophenolicus (strain ATCC 700700 / DSM 12829 / CIP 107037 / JCM 12360 / KCTC 9906 / NCIMB 13794 / A6) (Arthrobacter chlorophenolicus).